We begin with the raw amino-acid sequence, 341 residues long: D-aspartate oxidase (341 aa).

The FAD site is built by aspartate 36, arginine 37, threonine 43, serine 44, methionine 50, glycine 307, isoleucine 311, and serine 312. The Microbody targeting signal signature appears at 339 to 341; that stretch reads SKL.

This sequence belongs to the DAMOX/DASOX family. In terms of assembly, dimer or tetramer. Interacts with PEX5; the interaction is direct and required for localization of DDO to the peroxisome. Requires FAD as cofactor. In terms of tissue distribution, expressed in the small intestine (at protein level). Expressed in the ependymal cell layer of the telencephalic ventricles, hippocampus, thalamus, cerebellum, midbrain region, pons, olfactory bulbs, and cortex. Repressed in the testis. As to expression, expressed in the kidney, liver, stomach, pancreas, uterus, lactating breast, involuting mammary gland, brain, heart, lung, and skin. Expressed in kidney, liver, pancreas, and in the mammary gland regardless of lactation status.

Its subcellular location is the peroxisome matrix. It is found in the cytoplasm. The protein resides in the cytosol. The catalysed reaction is D-aspartate + O2 + H2O = oxaloacetate + H2O2 + NH4(+). It carries out the reaction D-glutamate + O2 + H2O = H2O2 + 2-oxoglutarate + NH4(+). Inhibited by the benzodiazepine olanzapine; chronic systemic administration of the benzodiazepine increases levels of D-aspartate and L-glutamate in the prefrontal cortex. Efficiently inhibited by 5-aminonicotinic acid (5-AN) and 1,4-Dihydropyrido[2,3-b]pyrazine-2,3-dione (DPPD). Inhibited by aminooxyacetic acid, thiolactomycin, anthranilic acid, malonate, meso-tartrate and L-tartrate. Benzoate has no effect on activity. Functionally, selectively catalyzes the oxidative deamination of acidic amino acids. Suppresses the level of D-aspartate in the brain, an amino acid that can act as an agonist for glutamate receptors. Protects the organism from the toxicity of D-amino acids. May also function in the intestine. In terms of biological role, selectively catalyzes the oxidative deamination of acidic amino acids. Does not exhibit D-aspartate oxidase activity. The chain is D-aspartate oxidase (Ddo) from Mus musculus (Mouse).